The chain runs to 160 residues: MMPAKLQLDVLRTLQSSARHGTQTLKNSNFLERFHKDRIVFCLPFFPALFLVPVQKVLQHLCLRFTQVAPYFIIQLFDLPSRHAENLAPLLASCRIQYTNCFSSSSNGQVPSIISLYLRVDLSPFYAKKFQIPYRVPMIWLDVFQVFFVFLVISQHSLHS.

Helical transmembrane passes span 39 to 59 and 136 to 156; these read IVFC…KVLQ and VPMI…ISQH.

This sequence belongs to the UPF0479 family.

The protein localises to the membrane. The polypeptide is UPF0479 membrane protein YLL066W-A (Saccharomyces cerevisiae (strain ATCC 204508 / S288c) (Baker's yeast)).